Here is a 135-residue protein sequence, read N- to C-terminus: Small ribosomal subunit protein uS12 (135 aa).

A 3-methylthioaspartic acid modification is found at aspartate 89. The interval 103 to 135 is disordered; that stretch reads DTAGVKNRMQSRSKYGTKRPKPGQAAAPAGKKR. A compositionally biased stretch (basic residues) spans 111 to 123; sequence MQSRSKYGTKRPK. Residues 124 to 135 show a composition bias toward low complexity; that stretch reads PGQAAAPAGKKR.

The protein belongs to the universal ribosomal protein uS12 family. Part of the 30S ribosomal subunit. Contacts proteins S8 and S17. May interact with IF1 in the 30S initiation complex.

Functionally, with S4 and S5 plays an important role in translational accuracy. Interacts with and stabilizes bases of the 16S rRNA that are involved in tRNA selection in the A site and with the mRNA backbone. Located at the interface of the 30S and 50S subunits, it traverses the body of the 30S subunit contacting proteins on the other side and probably holding the rRNA structure together. The combined cluster of proteins S8, S12 and S17 appears to hold together the shoulder and platform of the 30S subunit. The polypeptide is Small ribosomal subunit protein uS12 (Gloeobacter violaceus (strain ATCC 29082 / PCC 7421)).